The following is a 239-amino-acid chain: MGKSLIQQRRGKGTTTFRAPSHRYRGAVKYVPLNIVKEKTLRGVVEEILHDPGRTAPVARVKFEDGTKKLILAPEGVLVGQEIYIGPEAPIAIGNTLPLAKIPEGTYVYNIEGVPGDGGKYVRAGGTYALVVSRERDKVIVQLPSGELKQFKPECRATIGVVAGGGRLEKPIVKAGKAYYIAKARNRFWPKPRGVKMNAVNHPHGGKEHHIGRPSTVSRRAPPGRKVGHIAARRTGRRK.

A disordered region spans residues 200-239 (VNHPHGGKEHHIGRPSTVSRRAPPGRKVGHIAARRTGRRK). Basic residues predominate over residues 222–239 (PPGRKVGHIAARRTGRRK).

Belongs to the universal ribosomal protein uL2 family. In terms of assembly, part of the 50S ribosomal subunit. Forms a bridge to the 30S subunit in the 70S ribosome.

In terms of biological role, one of the primary rRNA binding proteins. Required for association of the 30S and 50S subunits to form the 70S ribosome, for tRNA binding and peptide bond formation. It has been suggested to have peptidyltransferase activity; this is somewhat controversial. Makes several contacts with the 16S rRNA in the 70S ribosome. In Thermococcus gammatolerans (strain DSM 15229 / JCM 11827 / EJ3), this protein is Large ribosomal subunit protein uL2.